Reading from the N-terminus, the 182-residue chain is Crossover junction endodeoxyribonuclease RuvC (182 aa).

Active-site residues include Asp-7, Glu-69, and Asp-141. Residues Asp-7, Glu-69, and Asp-141 each coordinate Mg(2+).

The protein belongs to the RuvC family. As to quaternary structure, homodimer which binds Holliday junction (HJ) DNA. The HJ becomes 2-fold symmetrical on binding to RuvC with unstacked arms; it has a different conformation from HJ DNA in complex with RuvA. In the full resolvosome a probable DNA-RuvA(4)-RuvB(12)-RuvC(2) complex forms which resolves the HJ. The cofactor is Mg(2+).

The protein localises to the cytoplasm. The enzyme catalyses Endonucleolytic cleavage at a junction such as a reciprocal single-stranded crossover between two homologous DNA duplexes (Holliday junction).. The RuvA-RuvB-RuvC complex processes Holliday junction (HJ) DNA during genetic recombination and DNA repair. Endonuclease that resolves HJ intermediates. Cleaves cruciform DNA by making single-stranded nicks across the HJ at symmetrical positions within the homologous arms, yielding a 5'-phosphate and a 3'-hydroxyl group; requires a central core of homology in the junction. The consensus cleavage sequence is 5'-(A/T)TT(C/G)-3'. Cleavage occurs on the 3'-side of the TT dinucleotide at the point of strand exchange. HJ branch migration catalyzed by RuvA-RuvB allows RuvC to scan DNA until it finds its consensus sequence, where it cleaves and resolves the cruciform DNA. The polypeptide is Crossover junction endodeoxyribonuclease RuvC (Variovorax paradoxus (strain S110)).